Consider the following 32-residue polypeptide: MSVLVYSFASFVLGWCLRSGITYFTRLMETSS.

A helical transmembrane segment spans residues 8-24; that stretch reads FASFVLGWCLRSGITYF.

The protein belongs to the inovirus G9P protein family.

Its subcellular location is the virion. It is found in the host membrane. Its function is as follows. May initiate with G7P the virion concomitant assembly-budding process, by interacting with the packaging signal of the viral genome. The assembly-budding takes place at the host inner membrane. In turn, G7P and G9P are present at the end of the filamentous virion that emerges first from the bacterial host. In Escherichia coli (Bacteriophage f1), this protein is Tail virion protein G9P (IX).